Consider the following 224-residue polypeptide: Glycerol-3-phosphate acyltransferase (224 aa).

The next 6 membrane-spanning stretches (helical) occupy residues 3 to 23 (IFLS…IGSL), 54 to 74 (VFGY…VVFA), 90 to 112 (LYFY…PIYF), 127 to 147 (LISI…LLLF), 152 to 172 (VSLS…IPWM), and 183 to 203 (GFGQ…LIFW).

It belongs to the PlsY family. In terms of assembly, probably interacts with PlsX.

It localises to the cell membrane. It catalyses the reaction an acyl phosphate + sn-glycerol 3-phosphate = a 1-acyl-sn-glycero-3-phosphate + phosphate. The protein operates within lipid metabolism; phospholipid metabolism. Its function is as follows. Catalyzes the transfer of an acyl group from acyl-phosphate (acyl-PO(4)) to glycerol-3-phosphate (G3P) to form lysophosphatidic acid (LPA). This enzyme utilizes acyl-phosphate as fatty acyl donor, but not acyl-CoA or acyl-ACP. This chain is Glycerol-3-phosphate acyltransferase, found in Mycoplasmopsis synoviae (strain 53) (Mycoplasma synoviae).